Reading from the N-terminus, the 215-residue chain is Translation initiation factor IF-3 (215 aa).

The interval 159–215 is disordered; that stretch reads SAEVQQPPKREGRNMIMFLGPRKTPLQKDKPEQATKAERTLPIAKPPGKTAAPAAAN. A compositionally biased stretch (basic and acidic residues) spans 184–197; it reads LQKDKPEQATKAER. Low complexity predominate over residues 200 to 215; it reads PIAKPPGKTAAPAAAN.

The protein belongs to the IF-3 family. As to quaternary structure, monomer.

The protein resides in the cytoplasm. IF-3 binds to the 30S ribosomal subunit and shifts the equilibrium between 70S ribosomes and their 50S and 30S subunits in favor of the free subunits, thus enhancing the availability of 30S subunits on which protein synthesis initiation begins. In Synechococcus sp. (strain RCC307), this protein is Translation initiation factor IF-3.